We begin with the raw amino-acid sequence, 126 residues long: Small ribosomal subunit protein uS11 (126 aa).

It belongs to the universal ribosomal protein uS11 family. As to quaternary structure, part of the 30S ribosomal subunit. Interacts with proteins S7 and S18. Binds to IF-3.

Functionally, located on the platform of the 30S subunit, it bridges several disparate RNA helices of the 16S rRNA. Forms part of the Shine-Dalgarno cleft in the 70S ribosome. In Treponema pallidum (strain Nichols), this protein is Small ribosomal subunit protein uS11.